Here is a 120-residue protein sequence, read N- to C-terminus: Chaperonin GroEL (120 aa).

23 to 27 (DGTTT) is an ATP binding site.

The protein belongs to the chaperonin (HSP60) family. In terms of assembly, forms a cylinder of 14 subunits composed of two heptameric rings stacked back-to-back. Interacts with the co-chaperonin GroES.

It localises to the cytoplasm. The enzyme catalyses ATP + H2O + a folded polypeptide = ADP + phosphate + an unfolded polypeptide.. In terms of biological role, together with its co-chaperonin GroES, plays an essential role in assisting protein folding. The GroEL-GroES system forms a nano-cage that allows encapsulation of the non-native substrate proteins and provides a physical environment optimized to promote and accelerate protein folding. This Mycobacterium xenopi protein is Chaperonin GroEL.